The primary structure comprises 384 residues: Farnesyl pyrophosphate synthase 1, mitochondrial (384 aa).

Isopentenyl diphosphate contacts are provided by Lys89, Arg92, and Gln128. Positions 135 and 139 each coordinate Mg(2+). Dimethylallyl diphosphate is bound at residue Arg144. Isopentenyl diphosphate is bound at residue Arg145. Dimethylallyl diphosphate-binding residues include Lys232, Thr233, Gln271, Lys288, and Lys297.

The protein belongs to the FPP/GGPP synthase family. Requires Mg(2+) as cofactor. As to expression, the FPS1L mRNA accumulates preferentially in inflorescences, whereas the FPS1S mRNA is predominantly expressed in roots and inflorescences.

The protein resides in the mitochondrion. The protein localises to the cytoplasm. The enzyme catalyses isopentenyl diphosphate + dimethylallyl diphosphate = (2E)-geranyl diphosphate + diphosphate. It carries out the reaction isopentenyl diphosphate + (2E)-geranyl diphosphate = (2E,6E)-farnesyl diphosphate + diphosphate. The protein operates within isoprenoid biosynthesis; farnesyl diphosphate biosynthesis; farnesyl diphosphate from geranyl diphosphate and isopentenyl diphosphate: step 1/1. It participates in isoprenoid biosynthesis; geranyl diphosphate biosynthesis; geranyl diphosphate from dimethylallyl diphosphate and isopentenyl diphosphate: step 1/1. Catalyzes the sequential condensation of isopentenyl pyrophosphate with the allylic pyrophosphates, dimethylallyl pyrophosphate, and then with the resultant geranylpyrophosphate to the ultimate product farnesyl pyrophosphate. The polypeptide is Farnesyl pyrophosphate synthase 1, mitochondrial (FPS1) (Arabidopsis thaliana (Mouse-ear cress)).